Reading from the N-terminus, the 286-residue chain is GTP cyclohydrolase MptA (286 aa).

The protein belongs to the GTP cyclohydrolase IV family. As to quaternary structure, homodimer. It depends on Fe(2+) as a cofactor.

The catalysed reaction is GTP + H2O = 7,8-dihydroneopterin 2',3'-cyclic phosphate + formate + diphosphate + H(+). It participates in cofactor biosynthesis; 5,6,7,8-tetrahydromethanopterin biosynthesis. Functionally, converts GTP to 7,8-dihydro-D-neopterin 2',3'-cyclic phosphate, the first intermediate in the biosynthesis of coenzyme methanopterin. This Thermoplasma acidophilum (strain ATCC 25905 / DSM 1728 / JCM 9062 / NBRC 15155 / AMRC-C165) protein is GTP cyclohydrolase MptA.